The sequence spans 321 residues: Peptidase 1 (321 aa).

An N-terminal signal peptide occupies residues 1 to 18 (MKIILAIASLLVLSAVYA). Positions 19–98 (RPASIKTFEE…LKTQFDLNAE (80 aa)) are excised as a propeptide. An N-linked (GlcNAc...) asparagine glycan is attached at N34. C130 and C170 are joined by a disulfide. The active site involves C133. N151 is a glycosylation site (N-linked (GlcNAc...) asparagine). Catalysis depends on residues H269 and N289.

The protein belongs to the peptidase C1 family.

It localises to the secreted. It catalyses the reaction Broad endopeptidase specificity.. In terms of biological role, probable thiol protease. This Euroglyphus maynei (Mayne's house dust mite) protein is Peptidase 1 (EURM1).